The sequence spans 639 residues: Poly(A)-specific ribonuclease PARN (639 aa).

Positions 28 and 30 each coordinate a divalent metal cation. A phosphoserine mark is found at S163 and S167. One can recognise an R3H domain in the interval K178 to D245. K220 bears the N6-acetyllysine mark. A divalent metal cation is bound by residues D292 and D382. K499 carries the N6-acetyllysine modification. S530 carries the phosphoserine modification. S557 bears the Phosphoserine; by MAPKAPK2 mark. The interval T563–L611 is disordered. Phosphoserine occurs at positions 583, 587, 619, 623, and 628. Phosphothreonine is present on T631.

This sequence belongs to the CAF1 family. As to quaternary structure, homodimer. Found in a mRNA decay complex with RENT1, RENT2 and RENT3B. Interacts with KHSRP. Interacts with CELF1/CUGBP1. Interacts with ZC3HAV1 in an RNA-independent manner. Interacts with DHX36. Requires Mg(2+) as cofactor. Phosphorylation by MAPKAPK2, preventing GADD45A mRNA degradation after genotoxic stress.

The protein localises to the nucleus. It localises to the cytoplasm. It is found in the nucleolus. It catalyses the reaction Exonucleolytic cleavage of poly(A) to 5'-AMP.. 3'-exoribonuclease that has a preference for poly(A) tails of mRNAs, thereby efficiently degrading poly(A) tails. Exonucleolytic degradation of the poly(A) tail is often the first step in the decay of eukaryotic mRNAs and is also used to silence certain maternal mRNAs translationally during oocyte maturation and early embryonic development. Interacts with both the 3'-end poly(A) tail and the 5'-end cap structure during degradation, the interaction with the cap structure being required for an efficient degradation of poly(A) tails. Involved in nonsense-mediated mRNA decay, a critical process of selective degradation of mRNAs that contain premature stop codons. Also involved in degradation of inherently unstable mRNAs that contain AU-rich elements (AREs) in their 3'-UTR, possibly via its interaction with KHSRP. Probably mediates the removal of poly(A) tails of AREs mRNAs, which constitutes the first step of destabilization. Also able to recognize poly(A) tails of microRNAs such as MIR21 and H/ACA box snoRNAs (small nucleolar RNAs) leading to microRNAs degradation or snoRNA increased stability. The polypeptide is Poly(A)-specific ribonuclease PARN (PARN) (Pongo abelii (Sumatran orangutan)).